Reading from the N-terminus, the 188-residue chain is Small ribosomal subunit protein uS7 (188 aa).

It belongs to the universal ribosomal protein uS7 family. As to quaternary structure, part of the 30S ribosomal subunit.

In terms of biological role, one of the primary rRNA binding proteins, it binds directly to 16S rRNA where it nucleates assembly of the head domain of the 30S subunit. Is located at the subunit interface close to the decoding center. The protein is Small ribosomal subunit protein uS7 of Methanococcus aeolicus (strain ATCC BAA-1280 / DSM 17508 / OCM 812 / Nankai-3).